The primary structure comprises 135 residues: Lactoylglutathione lyase (135 aa).

A VOC domain is found at 2 to 126 (QILHTMLRVG…DGYKIEFIEN (125 aa)). A Ni(2+)-binding site is contributed by histidine 5. Arginine 9 is a binding site for substrate. Glutamate 56 serves as a coordination point for Ni(2+). Substrate-binding residues include asparagine 60 and histidine 74. Ni(2+) is bound by residues histidine 74 and glutamate 122. Residue glutamate 122 is the Proton donor/acceptor of the active site.

The protein belongs to the glyoxalase I family. Homodimer. Requires Ni(2+) as cofactor.

The catalysed reaction is (R)-S-lactoylglutathione = methylglyoxal + glutathione. It functions in the pathway secondary metabolite metabolism; methylglyoxal degradation; (R)-lactate from methylglyoxal: step 1/2. Its function is as follows. Catalyzes the conversion of hemimercaptal, formed from methylglyoxal and glutathione, to S-lactoylglutathione. This chain is Lactoylglutathione lyase (gloA), found in Haemophilus influenzae (strain ATCC 51907 / DSM 11121 / KW20 / Rd).